The sequence spans 392 residues: Glutamate 5-kinase (392 aa).

K17 serves as a coordination point for ATP. Substrate is bound by residues S57, D144, and N156. 176–177 is a binding site for ATP; sequence SD. A PUA domain is found at 282-359; sequence AGILSVDAGA…AEIEALLGYA (78 aa). Residues 373 to 392 are disordered; that stretch reads TEQTGRKAGKSTKKKDEAHA.

This sequence belongs to the glutamate 5-kinase family.

The protein localises to the cytoplasm. The catalysed reaction is L-glutamate + ATP = L-glutamyl 5-phosphate + ADP. It functions in the pathway amino-acid biosynthesis; L-proline biosynthesis; L-glutamate 5-semialdehyde from L-glutamate: step 1/2. Its function is as follows. Catalyzes the transfer of a phosphate group to glutamate to form L-glutamate 5-phosphate. The sequence is that of Glutamate 5-kinase from Allorhizobium ampelinum (strain ATCC BAA-846 / DSM 112012 / S4) (Agrobacterium vitis (strain S4)).